The primary structure comprises 368 residues: Forkhead box protein I2 (368 aa).

The segment at 33 to 54 is disordered; it reads QNQQLPQRPAAPPALGYGRNEY. The fork-head DNA-binding region spans 124 to 218; that stretch reads RPPYSYSSLI…DNGNFRRKRK (95 aa). The interval 243 to 272 is disordered; sequence SLGSDSPRGASALEQSSYGTPESKSRPAGG. Residues 255–264 show a composition bias toward polar residues; the sequence is LEQSSYGTPE.

The protein resides in the nucleus. Functionally, possible transcriptional activator. This is Forkhead box protein I2 from Xenopus tropicalis (Western clawed frog).